The following is a 269-amino-acid chain: Sulfur carrier protein FdhD (269 aa).

Cys-111 (cysteine persulfide intermediate) is an active-site residue.

It belongs to the FdhD family.

Its subcellular location is the cytoplasm. Required for formate dehydrogenase (FDH) activity. Acts as a sulfur carrier protein that transfers sulfur from IscS to the molybdenum cofactor prior to its insertion into FDH. This Brucella abortus biovar 1 (strain 9-941) protein is Sulfur carrier protein FdhD.